The primary structure comprises 270 residues: Probable septum site-determining protein MinC (270 aa).

Residues 105 to 129 (DRRAPSSKAADEAPVQQAEPAAPAA) form a disordered region. The segment covering 116-129 (EAPVQQAEPAAPAA) has biased composition (low complexity).

Belongs to the MinC family. In terms of assembly, interacts with MinD and FtsZ.

In terms of biological role, cell division inhibitor that blocks the formation of polar Z ring septums. Rapidly oscillates between the poles of the cell to destabilize FtsZ filaments that have formed before they mature into polar Z rings. Prevents FtsZ polymerization. In Burkholderia pseudomallei (strain 668), this protein is Probable septum site-determining protein MinC.